Here is a 361-residue protein sequence, read N- to C-terminus: MSSNQSYVFYRQELNKTLWEVPDRYQNLTPVGSGAYGSVCSSFDTRTALRIAVKKLSRPFQSIIHAKRTYRELRLLKHMKHENVIGLLDVFSPAKSFEEFNDVYLVTHLMGADLNNIVKCQKLTDDHVQFLIYQILRGLKYIHSAGIIHRDLKPSNLAVNEDCELKILDFGLARHTDEEMTGYVATRWYRAPEIMLNWMHYNQTVDIWSVGCIMAELLTGRTLFPGTDHIDQLKLILRLVGTPEPELLQKISSEAARNYIQSLPYMPKMNFEDVFLGANPQAVDLLEKMLVLDTDKRITAAEALAHSYFAQYHDPDDEPIAEPYDQSFESRELDIEEWKRLTYEEVTCFVPPPLDSEEMES.

The Protein kinase domain maps to 25–309 (YQNLTPVGSG…AAEALAHSYF (285 aa)). Residues 31-39 (VGSGAYGSV) and Lys54 contribute to the ATP site. Catalysis depends on Asp151, which acts as the Proton acceptor. Thr181 is modified (phosphothreonine). Positions 181 to 183 (TGY) match the TXY motif. A Phosphotyrosine modification is found at Tyr183.

Belongs to the protein kinase superfamily. CMGC Ser/Thr protein kinase family. MAP kinase subfamily. The cofactor is Mg(2+). Post-translationally, dually phosphorylated on Thr-181 and Tyr-183, which activates the enzyme.

It carries out the reaction L-seryl-[protein] + ATP = O-phospho-L-seryl-[protein] + ADP + H(+). The catalysed reaction is L-threonyl-[protein] + ATP = O-phospho-L-threonyl-[protein] + ADP + H(+). Activated by tyrosine and threonine phosphorylation. Serine/threonine kinase which acts as an essential component of the MAP kinase signal transduction pathway. mapk14a is one of the four p38 MAPKs which play an important role in the cascades of cellular responses evoked by extracellular stimuli such as pro-inflammatory cytokines or physical stress leading to direct activation of transcription factors. Accordingly, p38 MAPKs phosphorylate a broad range of proteins and it has been estimated that they may have approximately 200 to 300 substrates each. Some of the targets are downstream kinases which are activated through phosphorylation and further phosphorylate additional targets. MPK2 is activated by upstream MAPKK/MAPKKK and stimulates MAPKAP kinase 2 to phosphorylate small heat shock proteins. Does not phosphorylate myelin basic protein or MAPKAP kinase 1. This Xenopus laevis (African clawed frog) protein is Mitogen-activated protein kinase 14 (mapk14).